The primary structure comprises 287 residues: Protease HtpX (287 aa).

Transmembrane regions (helical) follow at residues 4–24 (IFLL…VMSI) and 33–53 (SGLL…SLAI). Residue His139 coordinates Zn(2+). Residue Glu140 is part of the active site. Position 143 (His143) interacts with Zn(2+). Helical transmembrane passes span 154 to 174 (LIQG…AGII) and 195 to 215 (AVVF…VAYF). Glu220 is a Zn(2+) binding site.

It belongs to the peptidase M48B family. Zn(2+) is required as a cofactor.

The protein resides in the cell inner membrane. This chain is Protease HtpX, found in Shewanella piezotolerans (strain WP3 / JCM 13877).